We begin with the raw amino-acid sequence, 428 residues long: MTESERKQIIALIQREVIPAIGCTEPIAVALCVAKATETLGAKPEKIKVLLSANILKNAMGVGIPGTGMIGLPIAVALGALIGKSDYQLEVLKDSTPEAVEEGKKLIDEKRICISLKEDITEKLYIEVTCEAGGEQATAIISGGHTTFVYVAKGDEVLLNKQQTSGEEEEEETLELTLRKVYDFALTAPLDEIRFILETARLNKKAAEQSFQGDYGHALGKMLRGTYEHKIMGDSVFSHILSYTSAACDARMAGAMIPVMSNSGSGNQGISATLPVVVYAEENGKSEEELIRALMMSHLTVIYIKQSLGRLSALCGCVVAATGSSCGITWLMGGSYKQVAFAVQNMIANLTGMICDGAKPSCALKVTTGVSTAVLSAVMAMENRCVTSVEGIIDEDVDQSIRNLTRIGSQGMNETDRVVLDIMTHKGC.

It belongs to the UPF0597 family.

This Bacteroides fragilis (strain YCH46) protein is UPF0597 protein BF3772.